We begin with the raw amino-acid sequence, 130 residues long: uncharacterized protein (130 aa).

The residue at position 1 (methionine 1) is an N-acetylmethionine.

Homotetramer.

This is an uncharacterized protein from Arabidopsis thaliana (Mouse-ear cress).